We begin with the raw amino-acid sequence, 15281 residues long: MGAIGQDMAYDRLANPSRASSISSNRYSEPVEQSFAQGRLWFLHQLKLGASWDITPAAIRLRGHLDIDALNAASRALTQRHETLRTTFKEQDGVGVQVVHASGLERGLRIVDASSRDLAQLLAEEQTMKFDLESEPAWRVALLKVAEDHHILSIVVHHIISDSRSLDIIQQELGELYTAASQGKSISACPLGPIPIQYRDLTTWQNQDEQVAEQERQLGYWIEQLDNNTPAELLTELPRPAIPSGETGKISFQIDGSVHKELLAFCRSQQVTAYAVLLAAFRVAHFRLTGAEDATIGAPVANRDRPELENMVAPLATLQCMRVVLDEDDTFESVLRQIMSVMTEAHANRDVPFERIVSALLPGSTDTSRHPLVQLMFALHPAQDTGRARWGFLEAETLQSAAPTRFDMEMHLFEGDDRFDANVLFSTGLFDAEAIRSVVSIFREVLRRGISEPAVHVKTMPLTDGLAAIRDMGLLDIGTTDYPREASVVDMFQEQVALNPSATAVADASSRLSYSELDHKSDQLAAWLRRRQLKPETLIGVLSPPSCETMVSFLGILKAHLAYLPLDINVPLARIESILSAVDGHKLVLLGSNVPQPKVDVPDVELLRISDALNGSQVNGLAGKQATAKPSATDLAYVIFTSGSTGKPKGVMIEHRGIVRLVKGTNIISPAQAAVPTAHLANIAFDLSTWEIYTPILNGGTLVCIEHSVTLDSKALEAVFTKEGIRVAFLAPALIKQCLADRPAIFAGLDSLYAIGDRFDRRDALHAKSLVKHGVYNAYGPTENSVVSTIYSVSEASPFVTGVPVGRAISNSGAYVMDQDQQLVSPGVMGELVVSGDGLARGYTDSALDKNRFVVVQIDGESIRGYRTGDRARYSLKGGQIEFFGRMDQQVKIRGHRIEPAEVEHALLNSDQVRDAAVVIRRQEEEEPAMIAFVTTQGTLPDHLVNINGNGHVPDGNGSKNDQFAVHVESELRRRLQMLLPSYMMPARIVVLDHLPLNPNGKVDRKALGQSAKTVQKSKLVSQRVAPRNEIEAVLCEEYRSVLGVEVGITDNFFDLGGHSLTAMKLAARISQRLDIQASVATVFEQPMLADLAATIQRGSTLYSVIPTTEYTGPVEQSFAQGRLWFLEQLNTGASWYNVMLTVRLRGHLDVDALGTALLALEKRHETLRTTFEERDGVGMQVVHSSLMGELRLIDISEKSGTAAHEALMKEQSTRFDLTREPGWRVALLKLADHHIFSIVMHHIVSDGWSLDLLRHELGQLYSAALRGQDPLSRLEPLPIQYRDFAVWQKQDSQQKAAHQRQLEYWTKQLADSTPAELLTDFPRPSILSGKAGKVPVAIEGSLYDTLQVFSRTHQVTSFAVLLAAFRAAHFRLTGSDNATIGVPSANRNRPELENVIGFFVNTQCIRITIDENDNFESLVRQVRSTTTAAQDNQDVPFEQVVSSLMPSSSRDASRNPLVQLMFALHGQQDLFKIQLEGTEEEVIPTEEVTRFDIEFHLYQGASKLSGDIIFAADLFEAETIRGVVSVFQEVLRRGLQQPQTPIMTMPLTDGIPELERMGLLHMVKTDYPRNMSVVDVFQQQVRLSAEATAVIDSSSRMSYAELDQRSDQVAAWLRQRQLPAETFVAVLAPRSCEAVIALFGILKAGHAYLPLDVNVPAARLRAILAEVKGEKLVLLGAGEPSPEGQSPEVSIVRIADATSPAGHASLRDGKSKPTAGSLAYVIFTSGSTGKPKGVMIEHRGVLRLVKQTNILSSLPPAQTFRMAHMSNLAFDASIWEVFTALLNGGSLVCIDRFTILDAQALEALFLREHINIALFPPALLKQCLTDAAATIKSLDLLYVGGDRLDTADAALAKALVKSEVYNAYGPTENTVMSTLYSIADTERFVNGVPIGRAVSNSGVYVMDQNQQLVPLGVMGELVVTGDGLARGYTNPALDSDRFVDVIARGQLLRAYRTGDRARYRPKDGQVEFFGRMDHQVKVRGHRIELAEVEHALLSSAGVHDAVVVSNSQEDNQGVEMVAFITAQDNETLQEAQSSNQVQEWESHFETTAYADITAIDQNTLGRDFTSWTSMYDGTLIDKREMQEWLDDTMRTFLDGQAAGHVLEIGTGTGMVLFNLGQAGLKSYIGLEPSQSAVQFVNKAAQTFPGLEGKAQVHVGTAMDTGRLSALSPDLIVINSVAQYFPSREYLAEVVEALVRIPGVRRIFFGDMRTYATHKDFLVARAVHTNGSKVTRSKVQQEVARLEELEEELLVDPAFFTSLKESLSEEIEHVEILPKNMKVNNELSSYRYGAVLHIRNHNQNQSRSIHKINAESWIDFASSQMDRQGLARLLKENKDAESIAVFNIPYSKTIVERHIAKSLADDHDGDDTHSSIDGVAWISAAREKASQCPSLDVHDLVQLAEDAGFRVEVSWARQRSQNGALDVFFHHFQPTENESRALVDFPTDYKGQQARSLTNRPLQRVESRRIEAQVREQLQVLLPAYMIPARIVVLQNMPLNTSGKVDRKELTLRAKVTAARTPSSELVAPRDSIEAIICKEFKDVLGVEVGITDNFFNVGGHSLLATKLAARLSRQLNAQIAVKDIFDRPVIADLAATIQQDTTEHNPILPTSYTGPVEQSFAQGRLWFLDQLNVGATWYLMPFAVRLRGPLVVSALAAALLALEERHETLRTTFIEQEGIGMQVIHPFAPKELRVIDVSGEEESTIQKILEKEQTTPFNLASEPGFRLALLKTGEDEHILSTVMHHAISDGWSVDIFQQEIGQFYSAILRGHDPLAQIAPLSIQYRDFATWQRQIFQVAEHRRQLAYWTKQLADNKPAELLTDFKRPPMLSGRAGEIPVVVDGLIYEKLQDFCRIRQVTAFTVLLAAFRAAHYRMTGTEDATIGTPIANRNRPELEGLIGFFVNTQCMRITVDVEDSFETLVHQVRETTLAAHANQDVPFEQIVSNILPGSSDTSRNPLVQLMFALHSQQNLGKVRLEGIEEEIISIAETTRFDIEFHLYQEAERLNGSIVYAADLFVPETIQSVITIFQGILQKGLGEPDMPVASMALDGGLESLRSTGLLHPQQTDYPCDASVVQIFKQQVAVNPDVIAVRDESTRLSYADLDRKSDQVACWLSRRGIAPETFVAILAPRSCETIVAILGVLKANLAYLPLDVNVPASRLEAILSEVSGSMLVLVGAETPIPEGMAEAETIRITEILADAKTDDINGLAASQPTAASLAYVIFTSGSTGRPKGVMVEHRGIVRLTKQTNITSKLPESFHMAHISNLAFDASVWEVFTTLLNGGTLVCIDYFTLLESTALEKVFFDQRVNVALLPPALLKQCLDNSPALVKTLSVLYIGGDRLDASDAAKARGLVQTQAFNAYGPTENTVMSTIYPIAEDPFINGVPIGHAVSNSGAFVMDQNQQITPPGAMGELIVTGDGLARGYTTSSLNTGRFINVDIDGEQVRAYRTGDRVRYRPKDLQIEFFGRIDHQVKIRGHRIEPAEVEYALLSHDLVTDAAVVTHSQENQDLEMVGFVAARVADVREDESSNQVQEWQTHFDSIAYADITTIDQQSLGRDFMSWTSMYDGSLIKKSQMQEWLDDTMRSLLDSQPPGHVLEVGTGTGMVLFNLGREGGLQSYVGLEPSPSATAFVNKAAKSFPGLEDRIRVEVGTATDIDRLGDDLHAGLVVVNSVAQYFPSQDYLAQLVRDLTKVPGVERIFFGDMRSHAINRDFLVARAVHALGDKATKAEIQREVVRMEESEDELLVDPAFFTSLTTQVENIKHVEILPKRMRATNELSSYRYAAVLHVNDLAKPAHKVSPGAWVDFAATKMDRDALIRLLRGTKISDHIAIANIPNSKTIVERTICESVYDLGGDAKDSNDRVSWLSAARSNAVKVASLSAIDLVDIAQEAGFRVEISCARQWSQNGALDAVFHHLGPSPQSSHVLIDFLTDHQGRPEEALTNHPLHRAQSRRVERQIRERLQTLLPAYMIPAQIMVLDKLPLNANGKVDRKQLTQRAQTVPKAKQVSAPVAPRTEIERVLCQEFSDVLGVDIGIMENFFDLGGHSLMATKLAARISRRLETHVSVKEIFDHPRVCDLVLIVQQGSAPHDPIVSTKYTGPVPQSFAQGRLWFLDQLNFGATWYLMPLAVRLRGAMNVHALTAALLALERRHELLRTTFYEQNGVGMQKVNPVVTETLRIIDLSNGDGDYLPTLKKEQTAPFHLETEPGWRVALLRLGPGDYILSVVMHHIISDGWSVDVLFQELGQFYSTAVKGHDPLSQTTPLPIHYRDFALWQKKPTQESEHERQLQYWVEQLVDSAPAELLTDLPRPSILSGQAGEMSVTIEGALYKNLEEFCRVHRVTSFVVLLAALRAAHYRLTGSEDATIGTPIANRNRPELEQIIGFFVNTQCIRITVNEDETFESLVQQVRSTATAAFAHQDVPFEKIVSTLLPGSRDASRNPLVQLMFAVHSQKNLGELKLENAHSEVVPTEITTRFDLEFHLFQQDDKLEGSILYSTDLFEAVSVQSLLSVFQEILRRGLNGPDVPISTLPLQDGIVDLQRQGLLDVQKTEYPRDSSVVDVFHEQVSINPDSIALIHGSEKLSYAQLDRESDRVARWLRHRSFSSDTLIAVLAPRSCETIIAFLGILKANLAYLPLDVKAPAARIDAIVSSLPGNKLILLGANVTPPKLQEAAIDFVPIRDTFTTLTDGTLQDGPTIERPSAQSLAYAMFTSGSTGRPKGVMVQHRNIVRLVKNSNVVAKQPAAARIAHISNLAFDASSWEIYAPLLNGGAIVCADYFTTIDPQALQETFQEHEIRGAMLPPSLLKQCLVQAPDMISRLDILFAAGDRFSSVDALQAQRLVGSGVFNAYGPTENTILSTIYNVAENDSFVNGVPIGSAVSNSGAYIMDKNQQLVPAGVMGELVVTGDGLARGYMDPKLDADRFIQLTVNGSEQVRAYRTGDRVRYRPKDFQIEFFGRMDQQIKIRGHRIEPAEVEQAFLNDGFVEDVAIVIRTPENQEPEMVAFVTAKGDNSAREEEATTQIEGWEAHFEGGAYANIEEIESEALGYDFMGWTSMYDGTEIDKDEMREWLNDTMRSLLDGKPAGRVLEVGTGTGMIMFNLGRSQGLERYIGLEPAPSAAEFVNNAAKSFPGLAGRAEVHVGTAADVGTLQGLTSDMAVINSVAQYFPTPEYLAETIKSLVQVPGMKRIYLGDMRSWAMNRDFAAARAAYSLADNASKDRVRQKMMELEEKEEELLVDPAFFTALASQLQDRIQHVEILPKRMKATNELSSYRYAAVLHISDEPLPIYKIDPEAWINFEGSRLTREALAQVLKENENAESVAISNIPYSKTVVERHIVRSLDQEDANAPEESMDGSDWISAVRTRAQQCHTLSASDLFDIAEDAGFRVEVSWARQHSQHGALDAVFHHLKPATEDSRVLIKFPTDHQGRPLKSLTNQPLLPAQSRRAELLIREGLQTLLPPYMIPSQITLIDRMPLNANGKVDRRELARRAKITQKSKPVEDIVPPRNSVEATVCKGFTDVLGVEVGITDNFFNLGGHSLMATKLAARLGRQLNTRISVRDVFDQPVVADLAAVIQRNSAPHEPIKPADYTGPVPQSFAQGRLWFLDQLNVGATWYLMPLGIRLHGSLRVDALATAISALEQRHEPLRTTFHEEDGVGVQVVQDHRPKDLRIIDLSTQPKDAYLAVLKHEQTTLFDLATEPGWRVALIRLGEEEHILSIVMHHIISDGWSVEVLFDEMHRFYSSALRQQDPMEQILPLPIQYRDFAAWQKTEEQVAEHQRQLDYWTEHLADSTPAELLTDLPRPSILSGRANELPLTIEGRLHDKLRAFCRVHQATPFVILLAALRAAHYRLTGAEDATLGTPIANRNRPELENMIGFFVNTQCMRIAIEENDNFESLVRRVRSTATSAFANQDVPFESIVSSLLPGSRDASRNPLVQVILAVHSQQDLGKLTLEGLRDEAVDSAISTRFDVEFHLFEHADRLSGSVLYAKELFKLRTIESVVSVFLETLRRALDQPLTPLAVLPLTDGVGEIASKGLLDVPRTDYPRDANIVEVFQQHVRATPDAIAVKDATSILTYAQLDQQSDRLAIWLSRRHMMPETLVGVLAPRSCETIIAMFGIMKANLAYLPLDINSPAARLRSILSAVDGNKLVLLGSGVTAPEQENPEVEAVGIQEILAGTGLDKTQGSNARPSATSLAYVIFTSGSTGKPKGVMVEHRSVTRLAKPSNVISKLPQGARVAHLANIAFDASIWEIATTLLNGATLVCLDYHTVLDCRTLKEVFERESITVVTLMPALLKQCVAEIPETLAHLDLLYTGGDRVGGHDAMRARSLVKIGMFSGYGPTENTVISTIYEVDADEMFVNGVPIGKTVSNSGAYVMDRNQQLVPSGVVGELVVTGDGLARGYTDPSLNKNRFIYITVNGESIRAYRTGDRVRYRPHDLQIEFFGRMDQQVKIRGHRIEPGEVESALLSHNSVQDAAVVICAPADQDSGAEMVAFVAARNTEDEDTQEEEAVDQVQGWETHFETAAYSEVKDIRQSEVGNDFMGWTSMYDGSEIDKTDMHEWLNDTMRMILDAREPGHVLEIGTGTGMVMFNLAKCPGLQGYVGFEPSKSAAQFVNDAAQSFPALKDGRSIVHVGTATDINKAGPIQPRLVVINSVAQYFPTPEYLFRVVEALVQIPSVERIVFGDMRTNAINRDFVASRALHTLGEKANKRLVRQMIYELEANEEELLTDPAFFTSLRTRLGEKIKHVEILPKTMKATNELSKYRYAAVLHVRGSREQSTIHQVSPNAWIDFAADGLDRQTLINLLKEHKDAGTVAIGNIPYSKTIVERFVNKSLSEDDMEEGQNSLDGSAWVAAVRMAAQSCPSLDAMDVKEIAQEAGYQVEVSWARQWSQNGALDAIFHHFEPPKEGARTLIEFPTDYEGRNVNTLTNRPLNSIQSRRLGTQIREKLQTLLPPYMIPSRIMVLDQMPVNNNGKIDRKELVRRAIVAPKPRSAATRVAPRNEIEAILRDEFEDVLGTEVSVLDNFFDLGGHSLMATKLAARVSRRLDAHISIKDVFDQPVLADLAASIQRESAPHEPIPQRPYTGPAEQSFAQGRLWFLDQLNLGATWYLMPLAIRIRGQLRVAALSAALFALERRHETLRTTFEESDGVGVQIVGEARNSDLRVHDVSTGDDGEYLEVLRREQTVPFDLSSEPGWRVCLVKTGEEDHVLSIVMHHIIYDGWSVDILRGELGQFYSAALRGQDPLLHANPLPIQYRDFAAWQREAKQVEEHQRQLGYWSKQLVDSTPAELLTDLPRPSILSGRAGSVDVTIEGSVYGALQSFCRTRSVTTFVVLLTVFRIAHFRLTAVDDATIGTPIANRNRPELETLVGCFVNTQCMRISIADDDNFEGLVRQVRNVATAAYANQDVPFERIVSALVPGSRNTSRNPLVQLMFAVQSVEDYDQVRLEGLESVMMPGEASTRFDMEFHLVPGDQKLTGSVLYSSDLFEQGTIQNFVDIFQECLRSVLDQPLTPISVLPFSNAISNLESLDLLEMPTSDYPRDRTVVDLFREQAAICPDSIAVKDSSSQLTYAQLDEQSDRVAAWLHERHMPAESLVGVLSPRSCETIIAYFGIMKANLAYLPLDVYAPDARLAAILDTVEGERLLLLGAGVPQPGIQIPRLSTAYIAEALSHATTVDVTSIPQPSATSLAYVIFTSGSTGKPKGVMIEHRGIVRLVRDTNVNVFPESGSALPVSHFSNLAWDAATWEIYTAVLNGGTVVCIDRDTMLDIAALNSTFRKENVRAAFFTPAFLKQCLAETPELVANLEILHTAGDRLDPGDANLAGKTAKGGIFNVLGHTENTAYSTFYPVVGEETFVNGVPVGRGISNSHAYIIDRHQKLVPAGVMGELILTGDGVARGYTDSALNKDRFVYIDINGKSTWSYRTGDKARYRPRDGQLEFFGRMDQMVKIRGVRIEPGEVELTLLDHKSVLAATVVVRRPPNGDPEMIAFITIDAEDDVQTHKAIYKHLQGILPAYMIPSHLVILDQMPVTDNGKVDRKDLALRAQTVQKRRSTAARVPPRDEVEAVLCEEYSNLLEVEVGITDGFFDLGGHSLLATKLAARLSRQLNTRVSVKDVFDQPILADLADIIRRGSHRHDPIPATPYTGPVEQSFAQGRLWFLEQLNLGASWYLMPFAIRMRGPLQTKALAVALNALVHRHEALRTTFEDHDGVGVQVIQPKSSQDLRIIDLSDAVDDTAYLAALKREQTTAFDLTSEPGWRVSLLRLGDDDYILSIVMHHIISDGWTVDVLRQELGQFYSAAIRGQEPLSQAKSLPIQYRDFAVWQRQENQIKEQAKQLKYWSQQLADSTPCEFLTDLPRPSILSGEADAVPMVIDGTVYQLLTDFCRTHQVTSFSVLLAAFRTAHYRLTGTLDATVGTPIANRNRPELEGLIGFFVNTQCMRMAISETETFESLVQQVRLTTTEAFANQDVPFEQIVSTLLPGSRDTSRNPLVQVMFALQSQQDLGRIQLEGMTDEALETPLSTRLDLEVHLFQEVGKLSGSLLYSTDLFEVETIRGIVDVFLEILRRGLEQPKQRLMAMPITDGITKLRDQGLLTVAKPAYPRESSVIDLFRQQVAAAPDAIAVWDSSSTLTYADLDGQSNKLAHWLCQRNMAPETLVAVFAPRSCLTIVAFLGVLKANLAYLPLDVNAPAARIEAILSAVPGHKLVLVQAHGPELGLTMADTELVQIDEALASSSSGDHEQIHASGPTATSLAYVMFTSGSTGKPKGVMIDHRSIIRLVKNSDVVATLPTPVRMANVSNLAFDISVQEIYTALLNGGTLVCLDYLTLLDSKILYNVFVEAQVNAAMFTPVLLKQCLGNMPAIISRLSVLFNVGDRLDAHDAVAASGLIQDAVYNAYGPTENGMQSTMYKVDVNEPFVNGVPIGRSITNSGAYVMDGNQQLVSPGVMGEIVVTGDGLARGYTDSALDEDRFVHVTIDGEENIKAYRTGDRVRYRPKDFEIEFFGRMDQQVKIRGHRIEPAEVEHALLGHDLVHDAAVVLRKPANQEPEMIAFITSQEDETIEQHESNKQVQGWGEHFDVSRYADIKDLDTSTFGHDFLGWTSMYDGVDIPVNEMKEWLDETTASLLDNRPPGHILEIGAGTGMILSNLGKVDGLQKYVGLDPAPSAAIFVNEAVKSLPSLAGKARVLVGTALDIGSLDKNEIQPELVVINSVAQYFPTSEYLIKVVKAVVEVPSVKRVFFGDIRSQALNRDFLAARAVRALGDNASKEQIREKIAELEESEEELLVDPAFFVSLRSQLPNIKHVEVLPKLMKATNELSSYRYAAVLHISHNEEEQLLIQDIDPTAWVDFAATQKDSQGLRNLLQQGRDDVMIAVGNIPYSKTIVERHIMNSLDQDHVNSLDGTSWISDARSAAAICTSFDAPALTQLAKEEGFRVELSWARQRSQNGALDAVFHRLATDANCERSRVLVHFPTDHQGRQLRTLTNRPLQRAQSRRIESQVFEALQTALPAYMIPSRIIVLPQMPTNANGKVDRKQLARRAQVVAKRKAVSARVAPRNDTEIVLCEEYADILGTEVGITDNFFDMGGHSLMATKLAARLSRRLDTRVTVKEVFDKPVLADLAASIEQGSTPHLPIASSVYSGPVEQSYAQGRLWFLDQFNLNATWYHMSLAMRLLGPLNMDALDVALRALEQRHETLRTTFEAQKDIGVQVVHEAGMKRLKVLDLSDKNEKEHMAVLENEQMRPFTLASEPGWKGHLARLGPTEYILSLVMHHMFSDGWSVDILRQELGQFYSAALRGRDPLSQVKPLPIQYRDFAAWQKEAAQVAEHERQLAYWENQLADSTPGELLTDFPRPQFLSGKAGVIPVTIEGPVYEKLLKFSKERQVTLFSVLLTAFRATHFRLTGAEDATIGTPIANRNRPELEHIIGFFVNTQCMRLLLDTGSTFESLVQHVRSVATDAYSNQDIPFERIVSALLPGSRDASRSPLIQLMFALHSQPDLGNITLEGLEHERLPTSVATRFDMEFHLFQEPNKLSGSILFADELFQPETINSVVTVFQEILRRGLDQPQVSISTMPLTDGLIDLEKLGLLEIESSNFPRDYSVVDVFRQQVAANPNAPAVVDSETSMSYTSLDQKSEQIAAWLHAQGLRPESLICVMAPRSFETIVSLFGILKAGYAYLPLDVNSPAARIQPILSEVEGKRLVLLGSGIDMPQSDRMDVETARIQDILTNTKVERSDPMSRPSATSLAYVIFTSGSTGRPKGVMIEHRNILRLVKQSNVTSQLPQDLRMAHISNLAFDASIWEIFTAILNGGALICIDYFTLLDSQALRTTFEKARVNATLFAPALLKECLNHAPTLFEDLKVLYIGGDRLDATDAAKIQALVKGTVYNAYGPTENTVMSTIYRLTDGESYANGVPIGNAVSSSGAYIMDQKQRLVPPGVMGELVVSGDGLARGYTNSTLNADRFVDIVINDQKARAYRTGDRTRYRPKDGSIEFFGRMDQQVKIRGHRVEPAEVEQAMLGNKAIHDAAVVVQAVDGQETEMIGFVSMASDRFSEGEEEITNQVQEWEDHFESTAYAGIEAIDQATLGRDFTSWTSMYNGNLIDKAEMEEWLDDTMQSLLDKEDARPCAEIGTGTGMVLFNLPKNDGLESYVGIEPSRSAALFVDKAAQDFPGLQGKTQILVGTAEDIKLVKDFHPDVVVINSVAQYFPSRSYLVQIASELIHMTSVKTIFFGDMRSWATNRDFLVSRALYTLGDKATKDQIRQEVARLEENEDELLVDPAFFTSLTSQWPGKVKHVEILPKRMRTSNELSSYRYAAVLHICRDGEGRNRYGRRVHSVEENAWIDFASSGMDRHALVQMLDERRDAKTVAIGNIPHSNTINERHFTTSLDTEGEGIAQDSLDGSAWQSATKAMAARCPCLSVTELVEIGQAAGFRVEVSWARQRSQHGALDVVFHHLEDDRVGRVLINFPTDFERLPPSTGLTSRPLQRIQNRRFESQIREQLQTLLPPYMVPSRIVVLERMPLNANSKVDRKELARKARTLQTIKPSATRVAPRNDIEAVLCDEFQAVLGVTVGVMDNFFELGGHSLMATKLAARLSRRLDTRVSVKDIFNQPILQDLADVVQTGSAPHEAIPSTPYSGPVEQSFSQGRLWFLDQLNLNASWYHMPLASRLRGPLRIEALQSALATIEARHESLRTTFEEQDGVPVQIVRAARNKQLRIIDVSGTEDAYLAALKQEQDAAFDLTAEPGWRVALLRLGPDDHVLSIVMHHIISDGWSVDILRQELGQLYSNASSQPAPLPIQYRDFAIWQKQDSQIAEHQKQLNYWKRQLVNSKPAELLADFTRPKALSGDADVIPIEIDDQVYQNLRSFCRARHVTSFVALLAAFRAAHYRLTGAEDATIGSPIANRNRPELEGLIGCFVNTQCLRIPVKSEDTFDTLVKQARETATEAQDNQDVPFERIVSSMVASSRDTSRNPLVQVMFAVHSQHDLGNIRLEGVEGKPVSMAASTRFDAEMHLFEDQGMLGGNVVFSKDLFESETIRSVVAVFQETLRRGLANPHANLATLPLTDGLPSLRSLCLQVNQPDYPRDASVIDVFREQVASIPKSIAVIDASSQLTYTELDERSSQLATWLRRQVTVPEELVGVLAPRSCETIIAFLGIIKANLAYLPLDVNAPAGRIETILSSLPGNRLILLGSDTQAVKLHANSVRFTRISDALVESGSPPTEELSTRPTAQSLAYVMFTSGSTGVPKGVMVEHRGITRLVKNSNVVAKQPAAAAIAHLSNIAFDASSWEIYAPLLNGGTVVCIDYYTTIDIKALEAVFKQHHIRGAMLPPALLKQCLVSAPTMISSLEILFAAGDRLSSQDAILARRAVGSGVYNAYGPTENTVLSTIHNIGENEAFSNGVPIGNAVSNSGAFVMDQNQQLVSAGVIGELVVTGDGLARGYTDSKLRVDRFIYITLDGNRVRAYRTGDRVRHRPKDGQIEFFGRMDQQIKIRGHRIEPAEVEQALARDPAISDSAVITQLTDEEEPELVAFFSLKGNANGTNGVNGVSDQEKIDGDEQHALLMENKIRHNLQALLPTYMIPSRIIHVDQLPVNANGKIDRNELAVRAQATPRTSSVSTYVAPRNDIETIICKEFADILSVRVGITDNFFDLGGHSLIATKLAARLSRRLDTRVSVRDVFDTPVVGQLAASIQQGSTPHEAIPALSHSGPVQQSFAQGRLWFLDRFNLNAAWYIMPFGVRLRGPLRVDALQTALRALEERHELLRTTFEEQDGVGMQIVHSPRMRDICVVDISGANEDLAKLKEEQQAPFNLSTEVAWRVALFKAGENHHILSIVMHHIISDGWSVDIFQQELAQFYSVAVRGHDPLSQVKPLPIHYRDFAVWQRQDKQVAVHESQLQYWIEQLADSTPAEILSDFNRPEVLSGEAGTVPIVIEDEVYEKLSLFCRNHQVTSFVVLLAAFRVAHYRLTGAEDATIGTPIANRNRPELEDLIGFFVNTQCMRIALEEHDNFLSVVRRVRSTAASAFENQDVPFERLVSALLPGSRDASRNPLVQLMFVVHSQRNLGKLQLEGLEGEPTPYTATTRFDVEFHLFEQDKGLAGNVVFAADLFEAATIRSVVEVFHEILRRGLDQPDIAISTMPLVDGLAALNSRNLPAVEDIEPDFATEASVVDVFQTQVVANPDALAVTDTSTKLTYAELDQQSDHVAAWLSKQKLPAESIVVVLAPRSSETIVACIGILKANLAYLPMDSNVPEARRQAILSEIPGEKFVLLGAGVPIPDNKTADVRMVFISDIVASKTDKSYSPGTRPSASSLAYVIFTSGSTGRPKGVMVEHRGVISLVKQNASRIPQSLRMAHVSNLAFDASVWEIFTTLLNGGTLFCISYFTVLDSKALSAAFSDHRINITLLPPALLKQCLADAPSVLSSLESLYIGGDRLDGADATKVKDLVKGKAYNAYGPTENSVMSTIYTIEHETFANGVPIGTSLGPKSKAYIMDQDQQLVPAGVMGELVVAGDGLARGYTDPSLNTGRFIHITIDGKQVQAYRTGDRVRYRPRDYQIEFFGRLDQQIKIRGHRIEPAEVEQALLSDSSINDAVVVSAQNKEGLEMVGYITTQAAQSVDKEEASNKVQEWEAHFDSTAYANIGGIDRDALGQDFLSWTSMYDGSLIPREEMQEWLNDTMRSLLDNQPPGKVLEIGTGTGMVLFNLGKVEGLQSYAGLEPSRSVTAWVNKAIETFPSLAGSARVHVGTAEDISSIDGLRSDLVVINSVAQYFPSREYLAELTANLIRLPGVKRIFFGDMRTYATNKDFLVARAVHTLGSNASKAMVRQQVAKLEDDEEELLVDPAFFTSLSDQFPDEIKHVEILPKRMAATNELSSYRYAAVIHVGGHQMPNGEDEDKQWAVKDINPKAWVDFAGTRMDRQALLQLLQDRQRGDDVVAVSNIPYSKTIMERHLSQSLDDDEDGTSAVDGTAWISRTQSRAKECPALSVADLIEIGKGIGFEVEASWARQHSQRGGLDAVFHRFEPPRHSGHVMFRFPTEHKGRSSSSLTNRPLHLLQSRRLEAKVRERLQSLLPPYMIPSRITLLDQMPLTSNGKVDRKKLARQARVIPRSAASTLDFVAPRTEIEVVLCEEFTDLLGVKVGITDNFFELGGHSLLATKLSARLSRRLDAGITVKQVFDQPVLADLAASILQGSSRHRSIPSLPYEGPVEQSFAQGRLWFLDQFNIDALWYLIPFALRMRGPLQVDALAAALVALEERHESLRTTFEERDGVGIQVVQPLRTTKDIRIIDVSGMRDDDAYLEPLQKEQQTPFDLASEPGWRVALLKLGKDDHILSIVMHHIISDGWSTEVLQRELGQFYLAAKSGKAPLSQVAPLPIQYRDFAVWQRQEEQVAESQRQLDYWKKQLADSSPAELLADYTRPNVLSGEAGSVSFVINDSVYKSLVSFCRSRQVTTFTTLLAAFRAAHYRMTGSDDATIGTPIANRNRPELENLIGCFVNTQCMRITIGDDETFESLVQQVRSTTATAFENQDVPFERIVSTLSAGSRDTSRNPLVQLLFAVHSQQGLGRIQLDGVVDEPVLSTVSTRFDLEFHAFQEADRLNGSVMFATDLFQPETIQGFVAVVEEVLQRGLEQPQSPIATMPLAEGIAQLRDAGALQMPKSDYPRNASLVDVFQQQAMASPSTVAVTDSTSKLTYAELDRLSDQAASYLRRQQLPAETMVAVLAPRSCETIIAFLAILKANLAYMPLDVNTPSARMEAIISSVPGRRLILVGSGVRHADINVPNAKTMLISDTVTGTDAIGTPEPLVVRPSATSLAYVIFTSGSTGKPKGVMVEHRAIMRLVKDSNVVTHMPPATRMAHVTNIAFDVSLFEMCATLLNGGTLVCIDYLTLLDSTMLRETFEREQVRAAIFPPALLRQCLVNMPDAIGMLEAVYVAGDRFHSRDARATQALAGPRVYNAYGPTENAILSTIYNIDKHDPYVNGVPIGSAVSNSGAYVMDRNQQLLPPGVMGELVVTGEGVARGYTDASLDTDRFVTVTIDGQRQRAYRTGDRVRYRPKGFQIEFFGRLDQQAKIRGHRVELGEVEHALLSENSVTDAAVVLRTMEEEDPQLVAFVTTDHEYRSGSSNEEEDPYATQAAGDMRKRLRSLLPYYMVPSRVTILRQMPLNANGKVDRKDLARRAQMTPTASSSGPVHVAPRNETEAAICDEFETILGVKVGITDNFFELGGHSLLATKLAARLSRRMGLRISVKDLFDDPVPVSLAGKLEQQQGFSGEDESSTVGIVPFQLLPAEMSREIIQRDVVPQIENGHSTPLDMYPATQTQIFFLHDKATGHPATPPLFSLDFPETADCRRLASACAALVQHFDIFRTVFVSRGGRFYQVVLAHLDVPVEVIETEQELDEVALALHEADKQQPLRLGRAMLRIAILKRPGAKMRLVLRMSHSLYDGLSLEHIVNALHALYSDKHLAQAPKFGLYMHHMASRRAEGYNFWRSILQGSSMTSLKRSVGALEAMTPSAGTWQTSKSIRIPPAALKNGITQATLFTAAVSLLLAKHTKSTDVVFGRVVSGRQDLSINCQDIVGPCINEVPVRVRIDEGDDMGGLLRAIQDQYTSSFRHETLGLQEVKENCTDWTDATKEFSCCIAFQNLNLHPEAEIEGQQIRLEGLPAKDQARQANGHAPNGTNGTNGTNGTNGANGTNGTNGTNGTHANGINGSNGVNGRDSNVVSAAGDQAPVHDLDIVGIPEPDGSVKIGIGASRQILGEKVVGSMLNELCETMLALSRT.

Residues 34–463 (SFAQGRLWFL…AVHVKTMPLT (430 aa)) form a condensation 1 region. The segment at 513 to 918 (SYSELDHKSD…NSDQVRDAAV (406 aa)) is adenylation 1. Positions 1026 to 1100 (APRNEIEAVL…DLAATIQRGS (75 aa)) constitute a Carrier 1 domain. At Ser1060 the chain carries O-(pantetheine 4'-phosphoryl)serine. A condensation 2 region spans residues 1118–1549 (SFAQGRLWFL…QTPIMTMPLT (432 aa)). The segment at 1599-2004 (SYAELDQRSD…SSAGVHDAVV (406 aa)) is adenylation 2. Residues 2067 to 2251 (SWTSMYDGTL…LEELEEELLV (185 aa)) are methyltransferase (M) domain 1. Positions 2524 to 2598 (APRDSIEAII…DLAATIQQDT (75 aa)) constitute a Carrier 2 domain. Ser2558 bears the O-(pantetheine 4'-phosphoryl)serine mark. The tract at residues 2616 to 3044 (SFAQGRLWFL…EPDMPVASMA (429 aa)) is condensation 3. The tract at residues 3096–3498 (SYADLDRKSD…SHDLVTDAAV (403 aa)) is adenylation 3. The interval 3562–3749 (SMYDGSLIKK…EDELLVDPAF (188 aa)) is methyltransferase (M) domain 2. In terms of domain architecture, Carrier 3 spans 4011–4085 (APRTEIERVL…DLVLIVQQGS (75 aa)). The residue at position 4045 (Ser4045) is an O-(pantetheine 4'-phosphoryl)serine. Positions 4100–4530 (VPQSFAQGRL…GPDVPISTLP (431 aa)) are condensation 4. Residues 4582–4986 (SYAQLDRESD…FLNDGFVEDV (405 aa)) form an adenylation 4 region. Residues 5052–5241 (TSMYDGTEID…ELLVDPAFFT (190 aa)) are methyltransferase (M) domain 3. The Carrier 4 domain maps to 5503 to 5577 (PPRNSVEATV…DLAAVIQRNS (75 aa)). At Ser5537 the chain carries O-(pantetheine 4'-phosphoryl)serine. Positions 5592 to 6023 (VPQSFAQGRL…QPLTPLAVLP (432 aa)) are condensation 5. The segment at 6075–6478 (TYAQLDQQSD…SHNSVQDAAV (404 aa)) is adenylation 5. Residues 6545–6729 (WTSMYDGSEI…ELEANEEELL (185 aa)) are methyltransferase (M) domain 4. Residues 7000 to 7074 (APRNEIEAIL…DLAASIQRES (75 aa)) enclose the Carrier 5 domain. Ser7034 is modified (O-(pantetheine 4'-phosphoryl)serine). Residues 7092-7517 (SFAQGRLWFL…VLDQPLTPIS (426 aa)) are condensation 6. An adenylation 6 region spans residues 7572–7976 (TYAQLDEQSD…DHKSVLAATV (405 aa)). The 75-residue stretch at 8060–8134 (PPRDEVEAVL…DLADIIRRGS (75 aa)) folds into the Carrier 6 domain. Ser8094 carries the O-(pantetheine 4'-phosphoryl)serine modification. Residues 8152–8582 (SFAQGRLWFL…PKQRLMAMPI (431 aa)) form a condensation 7 region. The interval 8633–9038 (TYADLDGQSN…GHDLVHDAAV (406 aa)) is adenylation 7. A methyltransferase (M) domain 5 region spans residues 9111 to 9288 (PVNEMKEWLD…EESEEELLVD (178 aa)). The Carrier 7 domain maps to 9555 to 9629 (APRNDTEIVL…DLAASIEQGS (75 aa)). Ser9589 is modified (O-(pantetheine 4'-phosphoryl)serine). Positions 9647-10077 (SYAQGRLWFL…QVSISTMPLT (431 aa)) are condensation 8. Positions 10127–10529 (SYTSLDQKSE…GNKAIHDAAV (403 aa)) are adenylation 8. Residues 10588–10768 (RDFTSWTSMY…DQIRQEVARL (181 aa)) are methyltransferase (M) domain 6. The Carrier 8 domain maps to 11052–11126 (APRNDIEAVL…DLADVVQTGS (75 aa)). At Ser11086 the chain carries O-(pantetheine 4'-phosphoryl)serine. Residues 11144-11567 (SFSQGRLWFL…HANLATLPLT (424 aa)) form a condensation 9 region. The segment at 11616-12019 (TYTELDERSS…RDPAISDSAV (404 aa)) is adenylation 9. A Carrier 9 domain is found at 12124 to 12198 (APRNDIETII…QLAASIQQGS (75 aa)). Ser12158 carries the O-(pantetheine 4'-phosphoryl)serine modification. Residues 12216–12645 (SFAQGRLWFL…IAISTMPLVD (430 aa)) are condensation 10. The interval 12696–13096 (TYAELDQQSD…SDSSINDAVV (401 aa)) is adenylation 10. The methyltransferase (M) domain 7 stretch occupies residues 13162-13343 (YDGSLIPREE…EDDEEELLVD (182 aa)). One can recognise a Carrier 10 domain in the interval 13620–13694 (APRTEIEVVL…DLAASILQGS (75 aa)). Ser13654 is subject to O-(pantetheine 4'-phosphoryl)serine. Positions 13710–14143 (EQSFAQGRLW…PQSPIATMPL (434 aa)) are condensation 11. An adenylation 11 region spans residues 14194-14598 (TYAELDRLSD…SENSVTDAAV (405 aa)). The Carrier 11 domain occupies 14695–14769 (APRNETEAAI…SLAGKLEQQQ (75 aa)). O-(pantetheine 4'-phosphoryl)serine is present on Ser14729. Positions 14814–15158 (DMYPATQTQI…HPEAEIEGQQ (345 aa)) are condensation 12. The interval 15169–15224 (QARQANGHAPNGTNGTNGTNGTNGANGTNGTNGTNGTHANGINGSNGVNGRDSNVV) is disordered. Residues 15173–15211 (ANGHAPNGTNGTNGTNGTNGANGTNGTNGTNGTHANGIN) show a composition bias toward low complexity. Positions 15213–15224 (SNGVNGRDSNVV) are enriched in polar residues.

It belongs to the NRP synthetase family. It depends on pantetheine 4'-phosphate as a cofactor.

Its function is as follows. Nonribosomal peptide synthetase; part of the gene cluster that mediates the biosynthesis of the cycloundecapeptide cyclosporin A (CsA), a compound with antifungal activity used as an immunosuppressant drug. Cyclosporin A contains three non-proteinogenic amino acids: D-alanine, alpha-amino butyric acid and the unusual amino acid (4R)-4-[(E)-2-butenyl]-4-methyl-l-threonine (Bmt). The nonribosomal peptide synthetase (NRPS) catalyzes the elongation and cyclization of the undecapeptide chain. SimA contains 11 modules responsible for sequential uptake of substrates and chain elongation. In addition to the core condensation-adenylation-thiolation (C-A-T) domains present in each module, seven modules contain an additional N-methylation (M) domain (modules 2, 3, 4, 5, 7, 8, and 10). The terminal C domain (C12 or Ct) is implicated in cyclization of the peptidyl chains to form CsA. The first module (A1) takes up D-Ala which is provided by the alanine racemase simB. The A2, A3, A8, and A10 domains have the same substrate-specific signature for recognition of leucine residues. The unusual amino acid (4R)-4-[(E)-2-butenyl]-4-methyl-l-threonine (Bmt) is recognized by the fifth module (A5). The A11 domain recognizes L-Ala. The PKS simG mediates the biosynthesis of 3R-hydroxyl-4R-methyl-6E-octenoic acid from acetyl coenzyme A (acetyl-CoA), malonyl-CoA, and S-adenosylmethionine, and 3R-hydroxyl-4R-methyl-6E-octenoic acid is then be repeatedly oxidized by simI to 3R-hydroxy-4R-methyl-2-keto-6E-octenoic acid. The latter is likely converted to Bmt through the action of the aminotransferase SimJ. This Tolypocladium inflatum (Cyclosporin fungus) protein is Cyclosporin synthetase simA.